The primary structure comprises 282 residues: UPF0759 protein YunF (282 aa).

It belongs to the UPF0759 family.

This is UPF0759 protein YunF (yunF) from Bacillus subtilis (strain 168).